The chain runs to 422 residues: Beta-1,3-galactosyltransferase 2 (422 aa).

Residues 1–24 (MLQWRRRHCCFAKMTWNAKRSLFR) lie on the Cytoplasmic side of the membrane. The helical; Signal-anchor for type II membrane protein transmembrane segment at 25 to 45 (THLIGVLSLVFLFAMFLFFNH) threads the bilayer. Topologically, residues 46 to 422 (HDWLPGRAGF…AGRYRHRKLH (377 aa)) are lumenal. 5 N-linked (GlcNAc...) asparagine glycosylation sites follow: N75, N100, N119, N176, and N226. A disordered region spans residues 90–110 (TLRPQTATNSNNTDLSPQGVT).

The protein belongs to the glycosyltransferase 31 family. It depends on Mn(2+) as a cofactor. Detected in heart and brain.

Its subcellular location is the golgi apparatus membrane. The catalysed reaction is an N-acetyl-beta-D-glucosaminyl derivative + UDP-alpha-D-galactose = a beta-D-galactosyl-(1-&gt;3)-N-acetyl-beta-D-glucosaminyl derivative + UDP + H(+). It catalyses the reaction a beta-D-GlcNAc-(1-&gt;3)-beta-D-Gal-(1-&gt;4)-beta-D-Glc-(1&lt;-&gt;1)-Cer(d18:1(4E)) + UDP-alpha-D-galactose = a beta-D-Gal-(1-&gt;3)-beta-D-GlcNAc-(1-&gt;3)-beta-D-Gal-(1-&gt;4)-beta-D-Glc-(1&lt;-&gt;1')-Cer(d18:1(4E)) + UDP + H(+). It carries out the reaction a neolactoside IV(3)-beta-GlcNAc-nLc4Cer(d18:1(4E)) + UDP-alpha-D-galactose = a neolactoside IV(3)-beta-[Gal-beta-(1-&gt;3)-GlcNAc]-nLc4Cer(d18:1(4E)) + UDP + H(+). It participates in protein modification; protein glycosylation. Functionally, beta-1,3-galactosyltransferase that transfers galactose from UDP-galactose to substrates with a terminal beta-N-acetylglucosamine (beta-GlcNAc) residue. Can also utilize substrates with a terminal galactose residue, albeit with lower efficiency. Involved in the biosynthesis of the carbohydrate moieties of glycolipids and glycoproteins. Inactive towards substrates with terminal alpha-N-acetylglucosamine (alpha-GlcNAc) or alpha-N-acetylgalactosamine (alpha-GalNAc) residues. In Homo sapiens (Human), this protein is Beta-1,3-galactosyltransferase 2.